The following is a 272-amino-acid chain: MVFRAPLDFISASRLLLPHFADAPPVLSRSRSPEHPPAGFLSLALPGLCFSATQIASVCETLEETGDIERLARFLWSLPVNTDGRDSISEHESVQRARAVVAFHTGCYRELYRILETHRFTRASHSKLQAMWLEAHYREAEKLRGRPLGPVDKYRVRKKFPLPRTIWDGEQKTHCFKERTRGLLREWYLQDPYPNPGKKRELAHATGLTPTQVGNWFKNRRQRDRAAAAKNRLQHHRICPDSACTLSGGDSSERADGDTFLSVTDSDSDLDV.

A DNA-binding region (homeobox) is located at residues 169-228 (GEQKTHCFKERTRGLLREWYLQDPYPNPGKKRELAHATGLTPTQVGNWFKNRRQRDRAAA). The tract at residues 244 to 272 (CTLSGGDSSERADGDTFLSVTDSDSDLDV) is disordered.

The protein belongs to the SIX/Sine oculis homeobox family. In terms of assembly, interacts with GMNN.

It localises to the nucleus. Its function is as follows. Transcriptional regulator which can act as both a transcriptional repressor and activator by binding a ATTA homeodomain core recognition sequence on these target genes. During forebrain development represses WNT1 expression allowing zona limitans intrathalamica formation and thereby ensuring proper anterio-posterior patterning of the diencephalon and formation of the rostral diencephalon. Acts as a direct upstream activator of SHH expression in the rostral diencephalon ventral midline and that in turn SHH maintains its expression. In addition, Six3 activity is required for the formation of the telencephalon. During postnatal stages of brain development is necessary for ependymal cell maturation by promoting the maturation of radial glia into ependymal cells through regulation of neuroblast proliferation and migration. Acts on the proliferation and differentiation of neural progenitor cells through activating transcription of CCND1 and CCND2. During early lens formation plays a role in lens induction and specification by activating directly PAX6 in the presumptive lens ectoderm. In turn PAX6 activates SIX3 resulting in activation of PDGFRA and CCND1 promoting cell proliferation. Also is required for the neuroretina development by directly suppressing WNT8B expression in the anterior neural plate territory. Its action during retina development and lens morphogenesis is AES and TLE4-dependent manner. Furthermore, during eye development regulates several genes expression. Before and during early lens development represses the CRYGF promoter by binding a SIX repressor element. Directly activates RHO transcription, or cooperates with CRX or NRL. Six3 also functions in the formation of the proximodistal axis of the optic cup, and promotes the formation of optic vesicles-like structures. During pituitary development, acts in parallel or alternatively with HESX1 to control cell proliferation through Wnt/beta-catenin pathway. Plays a role in eye development by suppressing WNT1 expression and in dorsal-ventral patterning by repressing BMP signaling pathway. This Oryzias latipes (Japanese rice fish) protein is Homeobox protein SIX3 (six3).